A 44-amino-acid chain; its full sequence is Relaxin (44 aa).

At Gln-1 the chain carries Pyrrolidone carboxylic acid. Disulfide bonds link Cys-3–Cys-31, Cys-15–Cys-44, and Cys-30–Cys-35.

This sequence belongs to the insulin family. As to quaternary structure, heterodimer of a B chain and an A chain linked by two disulfide bonds.

It is found in the secreted. This chain is Relaxin, found in Carcharias taurus (Sand tiger shark).